The primary structure comprises 674 residues: Probable copper-transporting P-type ATPase B (674 aa).

The disordered stretch occupies residues 1–22 (MNHSNQMHHDNHESHNHHSGHA). The segment covering 7–16 (MHHDNHESHN) has biased composition (basic and acidic residues). 6 consecutive transmembrane segments (helical) span residues 32-52 (FFVSLIFAIPIILLSPLMGVN), 57-77 (FTFPGSEWVVLILSTILFFYG), 95-115 (GMMTLVALGISVAYIYSLYAF), 127-147 (TMDFFWELATLILIMLLGHWI), 284-304 (GYLFYFAVSVGVISFIVWMLI), and 315-335 (LVTVLVIACPHALGLAIPLVT). Asp367 functions as the 4-aspartylphosphate intermediate in the catalytic mechanism. The Mg(2+) site is built by Asp565 and Asp569. 2 helical membrane passes run 623–645 (LWWGAGYNIVAVPLAAGILAFIG) and 649–671 (SPAIGAILMSLSTVIVAINAFTL).

The protein belongs to the cation transport ATPase (P-type) (TC 3.A.3) family. Type IB subfamily.

The protein resides in the cell membrane. It carries out the reaction Cu(+)(in) + ATP + H2O = Cu(+)(out) + ADP + phosphate + H(+). In terms of biological role, involved in copper transport. This chain is Probable copper-transporting P-type ATPase B (copB), found in Staphylococcus epidermidis (strain ATCC 35984 / DSM 28319 / BCRC 17069 / CCUG 31568 / BM 3577 / RP62A).